The sequence spans 603 residues: Myotubularin (603 aa).

Over residues 1 to 13 the composition is skewed to polar residues; that stretch reads MASAPTSKYNSHS. Residues 1-32 are disordered; it reads MASAPTSKYNSHSLENESIKRTSRDGVNRDVG. Residues Ser13 and Ser18 each carry the phosphoserine modification. Residues 14–32 are compositionally biased toward basic and acidic residues; the sequence is LENESIKRTSRDGVNRDVG. In terms of domain architecture, GRAM spans 29–97; that stretch reads RDVGETLPRL…GVISRIEKMG (69 aa). In terms of domain architecture, Myotubularin phosphatase spans 163–538; that stretch reads GWTVYNPVEE…RHLELWVNYY (376 aa). A 1,2-diacyl-sn-glycero-3-phospho-(1D-myo-inositol-3,5-bisphosphate) contacts are provided by Asn288, Asn313, and Ile314. A 1,2-diacyl-sn-glycero-3-phospho-(1D-myo-inositol-3-phosphate)-binding residues include Asn288, Asn313, and Ile314. Cys375 functions as the Phosphocysteine intermediate in the catalytic mechanism. A 1,2-diacyl-sn-glycero-3-phospho-(1D-myo-inositol-3,5-bisphosphate)-binding residues include Ser376, Asp377, Gly378, Trp379, Asp380, Arg381, Lys417, and Arg421. Residues Ser376, Asp377, Gly378, Trp379, Asp380, and Arg381 each coordinate a 1,2-diacyl-sn-glycero-3-phospho-(1D-myo-inositol-3-phosphate). Arg421 serves as a coordination point for a 1,2-diacyl-sn-glycero-3-phospho-(1D-myo-inositol-3-phosphate). Phosphothreonine is present on Thr495. Residues 580-603 form a disordered region; sequence AKLSDPSASPSSPSQMMPHVQTHF. Residues 583–593 are compositionally biased toward low complexity; sequence SDPSASPSSPS. A Phosphoserine modification is found at Ser588.

Belongs to the protein-tyrosine phosphatase family. Non-receptor class myotubularin subfamily. In terms of assembly, heterodimer with MTMR12. Interacts with KMT2A/MLL1 (via SET domain). Interacts with DES in skeletal muscle but not in cardiac muscle. Interacts with SPEG.

It is found in the cytoplasm. Its subcellular location is the cell membrane. The protein localises to the cell projection. It localises to the filopodium. The protein resides in the ruffle. It is found in the late endosome. Its subcellular location is the myofibril. The protein localises to the sarcomere. It carries out the reaction a 1,2-diacyl-sn-glycero-3-phospho-(1D-myo-inositol-3-phosphate) + H2O = a 1,2-diacyl-sn-glycero-3-phospho-(1D-myo-inositol) + phosphate. The catalysed reaction is a 1,2-diacyl-sn-glycero-3-phospho-(1D-myo-inositol-3,5-bisphosphate) + H2O = a 1,2-diacyl-sn-glycero-3-phospho-(1D-myo-inositol-5-phosphate) + phosphate. It catalyses the reaction 1,2-dioctanoyl-sn-glycero-3-phospho-(1-D-myo-inositol-3-phosphate) + H2O = 1,2-dioctanoyl-sn-glycero-3-phospho-(1D-myo-inositol) + phosphate. The enzyme catalyses 1,2-dioctanoyl-sn-glycero-3-phospho-(1D-myo-inositol-3,5-bisphosphate) + H2O = 1,2-dioctanoyl-sn-glycero-3-phospho-(1D-myo-inositol-5-phosphate) + phosphate. It carries out the reaction 1,2-dihexadecanoyl-sn-glycero-3-phospho-(1D-myo-inositol-3,5-phosphate) + H2O = 1,2-dihexadecanoyl-sn-glycero-3-phospho-(1D-myo-inositol-5-phosphate) + phosphate. Its activity is regulated as follows. Allosterically activated by phosphatidylinositol 5-phosphate (PI5P). Functionally, lipid phosphatase which dephosphorylates phosphatidylinositol 3-monophosphate (PI3P) and phosphatidylinositol 3,5-bisphosphate (PI(3,5)P2). Has also been shown to dephosphorylate phosphotyrosine- and phosphoserine-containing peptides. Negatively regulates EGFR degradation through regulation of EGFR trafficking from the late endosome to the lysosome. Plays a role in vacuolar formation and morphology. Regulates desmin intermediate filament assembly and architecture. Plays a role in mitochondrial morphology and positioning. Required for skeletal muscle maintenance but not for myogenesis. In skeletal muscles, stabilizes MTMR12 protein levels. The protein is Myotubularin of Bos taurus (Bovine).